A 425-amino-acid polypeptide reads, in one-letter code: Proteinase-activated receptor 1 (425 aa).

Positions 1–21 (MGPRRLLLVAACLCLCGPLLS) are cleaved as a signal peptide. A propeptide spans 22–41 (ARTRARRPASKATNATLDPR) (removed for receptor activation). Asparagine 35, asparagine 62, and asparagine 75 each carry an N-linked (GlcNAc...) asparagine glycan. Topologically, residues 42–102 (SFLLRNPNDK…SGYLTSSWLT (61 aa)) are extracellular. A helical membrane pass occupies residues 103-128 (LFVPSVYTGVFVVSLPVNIMAIVVFI). Residues 129–137 (LKMKVKKPA) lie on the Cytoplasmic side of the membrane. The chain crosses the membrane as a helical span at residues 138–157 (VVYMLHLATADVLFVSVLPF). Over 158–176 (KISYYLSGSDWQFGSELCR) the chain is Extracellular. Cysteines 175 and 254 form a disulfide. A helical transmembrane segment spans residues 177-198 (FVTAAFYCNMYASILLMTVISI). Topologically, residues 199–218 (DRFLAVVYPMQSLSWRTLGR) are cytoplasmic. The chain crosses the membrane as a helical span at residues 219–239 (ASFTCLAIWALAIAGVVPLLL). Residues 240–268 (KEQTIQVPGLNITTCHDVLNETLLEGYYA) lie on the Extracellular side of the membrane. Residues asparagine 250 and asparagine 259 are each glycosylated (N-linked (GlcNAc...) asparagine). A helical transmembrane segment spans residues 269 to 288 (YYFSAFSAVFFFVPLIISTV). Residues 289–311 (CYVSIIRCLSSSTVANRSKKSRA) lie on the Cytoplasmic side of the membrane. A helical transmembrane segment spans residues 312 to 334 (LFLSAAVFCIFIICFGPTNILLI). Over 335–350 (AHYSFLSHTSTTEAAY) the chain is Extracellular. Residues 351-374 (FAYLLCVCVSSISCCIDPLIYYYA) traverse the membrane as a helical segment. Over 375–425 (SSECQRYVYSILCCKESSDPSSSNSSGQLMASKMDTCSSNLNNSIYKKLLT) the chain is Cytoplasmic. Serine 418 carries the post-translational modification Phosphoserine.

It belongs to the G-protein coupled receptor 1 family. Proteolytic cleavage by thrombin generates a new N-terminus that functions as a tethered ligand. Also proteolytically cleaved by cathepsin CTSG. Cleavage at 41-Arg-|-Ser-42 by CTSG results in receptor activation while cleavage at 55-Phe-|-Trp-56 results in inhibition of receptor activation. In terms of processing, phosphorylated in the C-terminal tail; probably mediating desensitization prior to the uncoupling and internalization of the receptor.

The protein localises to the cell membrane. Functionally, high affinity receptor that binds the activated thrombin, leading to calcium release from intracellular stores. The thrombin-activated receptor signaling pathway is mediated through PTX-insensitive G proteins, activation of phospholipase C resulting in the production of 1D-myo-inositol 1,4,5-trisphosphate (InsP3) which binds to InsP3 receptors causing calcium release from the stores. In astrocytes, the calcium released into the cytosol allows the Ca(2+)-dependent release of L-glutamate into the synaptic cleft through BEST1, that targets the neuronal postsynaptic GRIN2A/NMDAR receptor resulting in the synaptic plasticity regulation. May play a role in platelets activation and in vascular development. Mediates up-regulation of pro-inflammatory cytokines, such as MCP-1/CCL2 and IL6, triggered by coagulation factor Xa (F10) in cardiac fibroblasts and umbilical vein endothelial cells. The sequence is that of Proteinase-activated receptor 1 from Papio hamadryas (Hamadryas baboon).